The chain runs to 255 residues: Diphthine--ammonia ligase (255 aa).

This sequence belongs to the Diphthine--ammonia ligase family.

The enzyme catalyses diphthine-[translation elongation factor 2] + NH4(+) + ATP = diphthamide-[translation elongation factor 2] + AMP + diphosphate + H(+). It participates in protein modification; peptidyl-diphthamide biosynthesis. Its function is as follows. Amidase that catalyzes the last step of diphthamide biosynthesis using ammonium and ATP. Diphthamide biosynthesis consists in the conversion of an L-histidine residue in the translation elongation factor eEF-2 (EEF2) to diphthamide. This chain is Diphthine--ammonia ligase (dph6), found in Danio rerio (Zebrafish).